Reading from the N-terminus, the 421-residue chain is MKARIESVQAMPIYDSRGVPTVRVRLTLTDGTAATASIPSGASTGENEAVELRDGDPKAHGGKGVLKAVSNVNDVIAPAVMGLEPWRQAEIDRLMIELDGTANKERLGANAILGVSEAVAAAAAKSAGLPLYAYLGGAGQARLPIPMINILNGGKHADSSLDFQEFMIMPVGAPSFAEAMRYATETFQALKSILKAKGHATSVGDEGGFAPQLQSNDEACDLIVEAITKAGYEPGEDIAIALDPAASSFHENGVYRLTRSGQGDKTSSEMTDLYRRWIDKYPIVSIEDGLAENDWDGFREHTAVLGEKIQIVGDDLLVTNTRFIQRAIEEKSCNAVLIKLNQIGTVTETVEAIHLCRKAGWGFVISHRSGETEDTFMADFAVAMGGGQIKTGSVCRSERMAKYNRLLEIESDLGKAARFGR.

A (2R)-2-phosphoglycerate-binding site is contributed by glutamine 164. The active-site Proton donor is glutamate 206. Mg(2+) is bound by residues aspartate 243, glutamate 287, and aspartate 314. (2R)-2-phosphoglycerate contacts are provided by lysine 339, arginine 368, serine 369, and lysine 390. Catalysis depends on lysine 339, which acts as the Proton acceptor.

The protein belongs to the enolase family. In terms of assembly, component of the RNA degradosome, a multiprotein complex involved in RNA processing and mRNA degradation. The cofactor is Mg(2+).

The protein localises to the cytoplasm. It localises to the secreted. It is found in the cell surface. It catalyses the reaction (2R)-2-phosphoglycerate = phosphoenolpyruvate + H2O. It functions in the pathway carbohydrate degradation; glycolysis; pyruvate from D-glyceraldehyde 3-phosphate: step 4/5. In terms of biological role, catalyzes the reversible conversion of 2-phosphoglycerate (2-PG) into phosphoenolpyruvate (PEP). It is essential for the degradation of carbohydrates via glycolysis. In Methylococcus capsulatus (strain ATCC 33009 / NCIMB 11132 / Bath), this protein is Enolase 1.